We begin with the raw amino-acid sequence, 169 residues long: Ribosome maturation factor RimM (169 aa).

The PRC barrel domain maps to 95-168 (EGNYYIFQIV…KMKVELLEGL (74 aa)).

The protein belongs to the RimM family. As to quaternary structure, binds ribosomal protein uS19.

The protein localises to the cytoplasm. Functionally, an accessory protein needed during the final step in the assembly of 30S ribosomal subunit, possibly for assembly of the head region. Essential for efficient processing of 16S rRNA. May be needed both before and after RbfA during the maturation of 16S rRNA. It has affinity for free ribosomal 30S subunits but not for 70S ribosomes. This Desulforamulus reducens (strain ATCC BAA-1160 / DSM 100696 / MI-1) (Desulfotomaculum reducens) protein is Ribosome maturation factor RimM.